The primary structure comprises 150 residues: Transcriptional repressor NrdR (150 aa).

The segment at 3-34 (CPFCNASDTKVVDTRASEDDKIVRRRRECISC) is a zinc-finger region. One can recognise an ATP-cone domain in the interval 49–139 (LTVVKKDKNR…VYREFTDVKS (91 aa)).

The protein belongs to the NrdR family. Zn(2+) serves as cofactor.

In terms of biological role, negatively regulates transcription of bacterial ribonucleotide reductase nrd genes and operons by binding to NrdR-boxes. In Finegoldia magna (strain ATCC 29328 / DSM 20472 / WAL 2508) (Peptostreptococcus magnus), this protein is Transcriptional repressor NrdR.